Reading from the N-terminus, the 319-residue chain is UPF0761 membrane protein PBPRA3489 (319 aa).

Transmembrane regions (helical) follow at residues leucine 50–leucine 70, valine 107–leucine 127, phenylalanine 143–valine 163, alanine 188–leucine 208, alanine 215–leucine 235, and alanine 249–leucine 269.

The protein belongs to the UPF0761 family.

The protein resides in the cell inner membrane. The chain is UPF0761 membrane protein PBPRA3489 from Photobacterium profundum (strain SS9).